The chain runs to 61 residues: Photosystem II reaction center protein K (61 aa).

Positions 1–24 (MLNIFCLICICLNSTLYSSSFFFA) are excised as a propeptide. Residues 32 to 52 (FFNPIIDVMPIIPVLFFLLAF) traverse the membrane as a helical segment.

It belongs to the PsbK family. As to quaternary structure, PSII is composed of 1 copy each of membrane proteins PsbA, PsbB, PsbC, PsbD, PsbE, PsbF, PsbH, PsbI, PsbJ, PsbK, PsbL, PsbM, PsbT, PsbX, PsbY, PsbZ, Psb30/Ycf12, at least 3 peripheral proteins of the oxygen-evolving complex and a large number of cofactors. It forms dimeric complexes.

The protein localises to the plastid. It localises to the chloroplast thylakoid membrane. Its function is as follows. One of the components of the core complex of photosystem II (PSII). PSII is a light-driven water:plastoquinone oxidoreductase that uses light energy to abstract electrons from H(2)O, generating O(2) and a proton gradient subsequently used for ATP formation. It consists of a core antenna complex that captures photons, and an electron transfer chain that converts photonic excitation into a charge separation. The protein is Photosystem II reaction center protein K of Phalaenopsis aphrodite subsp. formosana (Moth orchid).